The primary structure comprises 575 residues: Alpha-humulene synthase (575 aa).

Asp325, Asp329, Asp469, and Glu477 together coordinate Mg(2+). The DDXXD motif signature appears at 325 to 329 (DDLYD).

Belongs to the terpene synthase family. Tpsa subfamily. Mg(2+) serves as cofactor. Mn(2+) is required as a cofactor.

It catalyses the reaction (2E,6E)-farnesyl diphosphate = alpha-humulene + diphosphate. The protein operates within sesquiterpene biosynthesis. It participates in terpene metabolism; oleoresin biosynthesis. In terms of biological role, terpene synthase (TPS) involved in the biosynthesis of sesquiterpene natural products included in conifer oleoresin secretions and volatile emissions; these compounds contribute to biotic and abiotic stress defense against herbivores and pathogens. Catalyzes the conversion of (2E,6E)-farnesyl diphosphate (FPP) to (1E,4E,8E)-alpha-humulene. The protein is Alpha-humulene synthase of Picea glauca (White spruce).